The following is a 139-amino-acid chain: Actin-depolymerizing factor (139 aa).

Residues 5 to 139 (SSGMAVDDEC…SMDIIKARAF (135 aa)) form the ADF-H domain.

Belongs to the actin-binding proteins ADF family. As to expression, preferentially in mature anther.

In terms of biological role, actin-depolymerizing protein. Severs actin filaments (F-actin) and binds to actin monomers. This Lilium longiflorum (Trumpet lily) protein is Actin-depolymerizing factor.